Here is a 94-residue protein sequence, read N- to C-terminus: NADH dehydrogenase [ubiquinone] iron-sulfur protein 3, mitochondrial (94 aa).

Belongs to the complex I 30 kDa subunit family. In terms of assembly, core subunit of respiratory chain NADH dehydrogenase (Complex I) which is composed of 45 different subunits. Interacts with NDUFAF3. Interacts with RAB5IF. Found in subcomplexes containing subunits NDUFS2, MT-ND1 and NDUFA13.

The protein resides in the mitochondrion inner membrane. It catalyses the reaction a ubiquinone + NADH + 5 H(+)(in) = a ubiquinol + NAD(+) + 4 H(+)(out). Core subunit of the mitochondrial membrane respiratory chain NADH dehydrogenase (Complex I) which catalyzes electron transfer from NADH through the respiratory chain, using ubiquinone as an electron acceptor. Essential for the catalytic activity and assembly of complex I. The sequence is that of NADH dehydrogenase [ubiquinone] iron-sulfur protein 3, mitochondrial from Mesocricetus auratus (Golden hamster).